Consider the following 230-residue polypeptide: Large ribosomal subunit protein uL1 (230 aa).

It belongs to the universal ribosomal protein uL1 family. In terms of assembly, part of the 50S ribosomal subunit.

Its function is as follows. Binds directly to 23S rRNA. The L1 stalk is quite mobile in the ribosome, and is involved in E site tRNA release. Functionally, protein L1 is also a translational repressor protein, it controls the translation of the L11 operon by binding to its mRNA. The polypeptide is Large ribosomal subunit protein uL1 (Desulfitobacterium hafniense (strain DSM 10664 / DCB-2)).